A 964-amino-acid chain; its full sequence is Pumilio homolog 3 (964 aa).

Residues 1–22 are disordered; the sequence is MMIPELGRRPMHRGNEDSSFGD. At Ser-192 the chain carries Phosphoserine. Disordered stretches follow at residues 204-235, 256-300, and 343-388; these read PVVQ…ASQG, GTPD…TSGL, and DGHN…VANP. Composition is skewed to polar residues over residues 207–216 and 223–234; these read QQPSRPASRN and DSNNNLSPSASQ. Thr-257 carries the post-translational modification Phosphothreonine. Composition is skewed to polar residues over residues 287 to 300 and 356 to 384; these read TSNQ…TSGL and RSDQ…SGSG. Residues 606–946 form the PUM-HD domain; it reads FGSSMLEEFK…HIVARVEKLV (341 aa). Pumilio repeat units follow at residues 626–661, 662–697, 698–733, 734–769, 770–806, 807–842, 843–878, and 879–920; these read EIAG…MVYE, EIMP…ELGE, KLID…QMVK, ELDG…FIIS, TFFG…KVME, EILS…VIIK, ELAG…LLVN, and EMLG…LILT.

It localises to the cytoplasm. Sequence-specific RNA-binding protein that regulates translation and mRNA stability by binding the 3'-UTR of target mRNAs. Binds the APUM-binding elements (APBEs) in the 3'-UTR mRNA sequence of CLV1, PNH, WUS and FAS2. This chain is Pumilio homolog 3 (APUM3), found in Arabidopsis thaliana (Mouse-ear cress).